The chain runs to 337 residues: PHD finger protein 11 (337 aa).

Residues 42–78 (KRICALCPKDLECSVLYFAQSENIAAHENCLLYSSAL) form a C2HC pre-PHD-type zinc finger. A PHD-type zinc finger spans residues 108–160 (LKCTFCGKKGATVGCDLKSCFKNYHFFCAKNDHAVLQADGRTGIYKVFCQQHA).

As to quaternary structure, interacts with BRCA1 and RELA.

The protein resides in the nucleus. Positive regulator of Th1-type cytokine gene expression. The protein is PHD finger protein 11 (PHF11) of Bos taurus (Bovine).